The chain runs to 181 residues: HGPRTase-like protein 2 (181 aa).

The protein belongs to the purine/pyrimidine phosphoribosyltransferase family. Archaeal HPRT subfamily.

May catalyze a purine salvage reaction, the substrate is unknown. This is HGPRTase-like protein 2 from Haloquadratum walsbyi (strain DSM 16854 / JCM 12705 / C23).